We begin with the raw amino-acid sequence, 349 residues long: uncharacterized protein (349 aa).

This is an uncharacterized protein from Escherichia coli (strain K12).